Reading from the N-terminus, the 391-residue chain is ATP phosphoribosyltransferase regulatory subunit (391 aa).

This sequence belongs to the class-II aminoacyl-tRNA synthetase family. HisZ subfamily. As to quaternary structure, heteromultimer composed of HisG and HisZ subunits.

The protein localises to the cytoplasm. It participates in amino-acid biosynthesis; L-histidine biosynthesis; L-histidine from 5-phospho-alpha-D-ribose 1-diphosphate: step 1/9. Functionally, required for the first step of histidine biosynthesis. May allow the feedback regulation of ATP phosphoribosyltransferase activity by histidine. The sequence is that of ATP phosphoribosyltransferase regulatory subunit from Clostridium kluyveri (strain ATCC 8527 / DSM 555 / NBRC 12016 / NCIMB 10680 / K1).